The primary structure comprises 179 residues: Large ribosomal subunit protein uL16 (179 aa).

Positions 147 to 179 (KASSASLANLDEDANSQTDDETSSSGSVATVES) are disordered. Acidic residues predominate over residues 156–168 (LDEDANSQTDDET). Over residues 169–179 (SSSGSVATVES) the composition is skewed to polar residues.

Belongs to the universal ribosomal protein uL16 family. As to quaternary structure, part of the 50S ribosomal subunit.

Binds 23S rRNA and is also seen to make contacts with the A and possibly P site tRNAs. The protein is Large ribosomal subunit protein uL16 of Prochlorococcus marinus (strain MIT 9211).